Consider the following 166-residue polypeptide: NAD(P)H-quinone oxidoreductase subunit I, chloroplastic (166 aa).

4Fe-4S ferredoxin-type domains follow at residues 55–84 (GRIH…VDWK) and 95–124 (LNYS…MTEE). Residues cysteine 64, cysteine 67, cysteine 70, cysteine 74, cysteine 104, cysteine 107, cysteine 110, and cysteine 114 each coordinate [4Fe-4S] cluster.

It belongs to the complex I 23 kDa subunit family. NDH is composed of at least 16 different subunits, 5 of which are encoded in the nucleus. [4Fe-4S] cluster is required as a cofactor.

It is found in the plastid. The protein resides in the chloroplast thylakoid membrane. The catalysed reaction is a plastoquinone + NADH + (n+1) H(+)(in) = a plastoquinol + NAD(+) + n H(+)(out). The enzyme catalyses a plastoquinone + NADPH + (n+1) H(+)(in) = a plastoquinol + NADP(+) + n H(+)(out). Functionally, NDH shuttles electrons from NAD(P)H:plastoquinone, via FMN and iron-sulfur (Fe-S) centers, to quinones in the photosynthetic chain and possibly in a chloroplast respiratory chain. The immediate electron acceptor for the enzyme in this species is believed to be plastoquinone. Couples the redox reaction to proton translocation, and thus conserves the redox energy in a proton gradient. This is NAD(P)H-quinone oxidoreductase subunit I, chloroplastic from Stevia rebaudiana (Stevia).